Consider the following 206-residue polypeptide: Large ribosomal subunit protein uL4 (206 aa).

Positions 45 to 75 (RQGTHSTKTRGEVRGGGRKPWRQKGTGRARQ) are disordered. The span at 60–71 (GGRKPWRQKGTG) shows a compositional bias: basic residues.

This sequence belongs to the universal ribosomal protein uL4 family. As to quaternary structure, part of the 50S ribosomal subunit.

Its function is as follows. One of the primary rRNA binding proteins, this protein initially binds near the 5'-end of the 23S rRNA. It is important during the early stages of 50S assembly. It makes multiple contacts with different domains of the 23S rRNA in the assembled 50S subunit and ribosome. Functionally, forms part of the polypeptide exit tunnel. The protein is Large ribosomal subunit protein uL4 of Thermoanaerobacter pseudethanolicus (strain ATCC 33223 / 39E) (Clostridium thermohydrosulfuricum).